The following is a 316-amino-acid chain: tRNA(Ile)-lysidine synthase (316 aa).

33 to 38 (SGGTDS) is an ATP binding site.

It belongs to the tRNA(Ile)-lysidine synthase family.

It is found in the cytoplasm. The enzyme catalyses cytidine(34) in tRNA(Ile2) + L-lysine + ATP = lysidine(34) in tRNA(Ile2) + AMP + diphosphate + H(+). Its function is as follows. Ligates lysine onto the cytidine present at position 34 of the AUA codon-specific tRNA(Ile) that contains the anticodon CAU, in an ATP-dependent manner. Cytidine is converted to lysidine, thus changing the amino acid specificity of the tRNA from methionine to isoleucine. In Bdellovibrio bacteriovorus (strain ATCC 15356 / DSM 50701 / NCIMB 9529 / HD100), this protein is tRNA(Ile)-lysidine synthase.